The sequence spans 78 residues: Acyl carrier protein (78 aa).

The 76-residue stretch at 2 to 77 (SDIAERVKKI…DAIKFLEKNS (76 aa)) folds into the Carrier domain. Ser37 is modified (O-(pantetheine 4'-phosphoryl)serine).

This sequence belongs to the acyl carrier protein (ACP) family. Post-translationally, 4'-phosphopantetheine is transferred from CoA to a specific serine of apo-ACP by AcpS. This modification is essential for activity because fatty acids are bound in thioester linkage to the sulfhydryl of the prosthetic group.

The protein localises to the cytoplasm. It functions in the pathway lipid metabolism; fatty acid biosynthesis. Carrier of the growing fatty acid chain in fatty acid biosynthesis. In Methylorubrum extorquens (strain CM4 / NCIMB 13688) (Methylobacterium extorquens), this protein is Acyl carrier protein.